A 236-amino-acid polypeptide reads, in one-letter code: Eukaryotic translation initiation factor 3 subunit J (236 aa).

Disordered regions lie at residues 1 to 88 (MADD…LANM) and 188 to 236 (SEKQ…DDFM). The segment covering 28–46 (GEDDDEDVKESWEDEEEKK) has biased composition (acidic residues). Basic and acidic residues-rich tracts occupy residues 47 to 58 (DEEKPTKTEAPV), 68 to 88 (AKLE…LANM), and 188 to 197 (SEKQKMEKAN). Coiled-coil stretches lie at residues 61–112 (KPNK…LKSA) and 174–209 (ADIK…KGKV). Basic residues predominate over residues 201 to 210 (SAAKAKGKVS).

This sequence belongs to the eIF-3 subunit J family. Component of the eukaryotic translation initiation factor 3 (eIF-3) complex. The eIF-3 complex interacts with pix.

It is found in the cytoplasm. Its function is as follows. Component of the eukaryotic translation initiation factor 3 (eIF-3) complex, which is involved in protein synthesis of a specialized repertoire of mRNAs and, together with other initiation factors, stimulates binding of mRNA and methionyl-tRNAi to the 40S ribosome. The eIF-3 complex specifically targets and initiates translation of a subset of mRNAs involved in cell proliferation. This is Eukaryotic translation initiation factor 3 subunit J from Drosophila virilis (Fruit fly).